The sequence spans 485 residues: Amyloid beta A4 precursor protein-binding family B member 1-interacting protein (485 aa).

Over residues 84 to 107 (QAQKTSGNQQSVVTQPSTGTNNDF) the composition is skewed to polar residues. Residues 84 to 157 (QAQKTSGNQQ…LSQEEQEARA (74 aa)) form a disordered region. Residues 125–147 (LPPPPPAPDLDLPPPPPPPPPEP) are compositionally biased toward pro residues. Residues 175–262 (KKLVVKVHMY…KVLFLEKKEK (88 aa)) form the Ras-associating domain. Positions 305 to 414 (VPELEGALYL…WVTGIRIAKY (110 aa)) constitute a PH domain.

This sequence belongs to the MRL family.

It is found in the cell membrane. The protein resides in the cytoplasm. It localises to the cytoskeleton. Appears to function in the signal transduction from Ras activation to actin cytoskeletal remodeling. This Gallus gallus (Chicken) protein is Amyloid beta A4 precursor protein-binding family B member 1-interacting protein (APBB1IP).